Here is a 359-residue protein sequence, read N- to C-terminus: MVVLGSTGSIGTNSLEIARKFNIEVEALACAENVKKLNAQIAEFHPKFVYIKDEKLKSKVAHNKIFSGENGICEMLNRCESKTVINALVGFAGLIPSLKIQNSGKILCLSNKESLVVGGKFLDTSKIRAIDSEHFGLKFLLENSAKPAKMIITASGGAFYKTPIKDLSSKKAADALKHPNWNMGAKITIDSATMANKLFEMLEAFWLYGCKNLDALIEPSSSVHALIEFIDGSTAAHLSRTDMKLAIAHAILPNLKSEILKPVDLLSLNLKFEKIDIKKYPIFELKDEVLSNPDLGVIINAANEIAVFAFLQGKCGFLDISSTIFKAVEKFNDLTPENAEDLIKIDKIVRNFARSELRL.

NADPH is bound by residues Thr7, Gly8, Ser9, Ile10, Ala31, Asn33, and Asn111. Lys112 lines the 1-deoxy-D-xylulose 5-phosphate pocket. Glu113 provides a ligand contact to NADPH. Asp131 provides a ligand contact to Mn(2+). Residues Ser132, Glu133, Ser155, and His178 each contribute to the 1-deoxy-D-xylulose 5-phosphate site. Residue Glu133 coordinates Mn(2+). Gly184 is a binding site for NADPH. Ser191, Asn196, Lys197, and Glu200 together coordinate 1-deoxy-D-xylulose 5-phosphate. Glu200 contributes to the Mn(2+) binding site.

It belongs to the DXR family. Mg(2+) serves as cofactor. Requires Mn(2+) as cofactor.

The enzyme catalyses 2-C-methyl-D-erythritol 4-phosphate + NADP(+) = 1-deoxy-D-xylulose 5-phosphate + NADPH + H(+). The protein operates within isoprenoid biosynthesis; isopentenyl diphosphate biosynthesis via DXP pathway; isopentenyl diphosphate from 1-deoxy-D-xylulose 5-phosphate: step 1/6. Functionally, catalyzes the NADPH-dependent rearrangement and reduction of 1-deoxy-D-xylulose-5-phosphate (DXP) to 2-C-methyl-D-erythritol 4-phosphate (MEP). This is 1-deoxy-D-xylulose 5-phosphate reductoisomerase from Campylobacter hominis (strain ATCC BAA-381 / DSM 21671 / CCUG 45161 / LMG 19568 / NCTC 13146 / CH001A).